Consider the following 585-residue polypeptide: Suppressor of mec-8 and unc-52 protein homolog 2 (585 aa).

Over residues 1–14 (MKPSKSHHKEKTAR) the composition is skewed to basic residues. 2 disordered regions span residues 1–52 (MKPS…SSFH) and 219–324 (KKKK…PRDK). Residues 15-39 (RREEKLEESDNPKYRDRAKERRENQ) are compositionally biased toward basic and acidic residues. R-[ED] repeat units lie at residues 16–17 (RE), 29–30 (RD), 36–37 (RE), and 258–259 (RE). Basic and acidic residues predominate over residues 276 to 288 (LSTKQEEPPVART). R-[ED] repeat units follow at residues 322–323 (RD), 436–437 (RD), 445–446 (RE), 450–451 (RE), 540–541 (RD), and 542–543 (RD). The tract at residues 523–585 (FQFGVKMQDG…EAQTPKRSKH (63 aa)) is disordered. A compositionally biased stretch (basic and acidic residues) spans 530 to 548 (QDGRKTRKQNRDRDQKLNN). Residue Thr-579 is modified to Phosphothreonine.

Belongs to the RED family. In terms of assembly, component of the spliceosome. Interacts with SMU1. Highly expressed in seedlings at 7 days after germination, young flowers before anthesis and developing siliques. Expressed at lower levels in roots, expanding leaves, open flowers, dry seeds and inflorescences. Not detected in senescing leaves.

Its subcellular location is the nucleus. In terms of biological role, auxiliary spliceosomal protein involved in splicing of specific pre-mRNAs that affect multiple aspects of development. The protein is Suppressor of mec-8 and unc-52 protein homolog 2 (SMU2) of Arabidopsis thaliana (Mouse-ear cress).